We begin with the raw amino-acid sequence, 652 residues long: Tetracycline resistance protein TetP (652 aa).

A tr-type G domain is found at 2–252 (KKIINIGIVA…CSYFPFASND (251 aa)). Residues 11-18 (AHVDAGKT), 75-79 (DTPGH), and 129-132 (NKLD) each bind GTP.

Belongs to the TRAFAC class translation factor GTPase superfamily. Classic translation factor GTPase family. TetM/TetO subfamily.

In terms of biological role, abolishes the inhibitory effect of tetracyclin on protein synthesis by a non-covalent modification of the ribosomes. This is Tetracycline resistance protein TetP (tetP) from Clostridium perfringens.